The following is a 114-amino-acid chain: Neurotrophic factor BDNF precursor form (114 aa).

Intrachain disulfides connect Cys-14–Cys-81, Cys-59–Cys-110, and Cys-69–Cys-112.

Belongs to the NGF-beta family.

The protein localises to the secreted. Its function is as follows. Promotes the survival of neuronal populations that are all located either in the central nervous system or directly connected to it. The protein is Neurotrophic factor BDNF precursor form (bdnf) of Xenopus laevis (African clawed frog).